Here is a 475-residue protein sequence, read N- to C-terminus: Ribulose bisphosphate carboxylase large chain (475 aa).

Positions methionine 1–valine 2 are excised as a propeptide. Proline 3 bears the N-acetylproline mark. The residue at position 14 (lysine 14) is an N6,N6,N6-trimethyllysine. Residues asparagine 123 and threonine 173 each coordinate substrate. The active-site Proton acceptor is lysine 175. Lysine 177 contacts substrate. The Mg(2+) site is built by lysine 201, aspartate 203, and glutamate 204. Lysine 201 is subject to N6-carboxylysine. The Proton acceptor role is filled by histidine 294. Substrate contacts are provided by arginine 295, histidine 327, and serine 379.

The protein belongs to the RuBisCO large chain family. Type I subfamily. In terms of assembly, heterohexadecamer of 8 large chains and 8 small chains; disulfide-linked. The disulfide link is formed within the large subunit homodimers. The cofactor is Mg(2+). The disulfide bond which can form in the large chain dimeric partners within the hexadecamer appears to be associated with oxidative stress and protein turnover.

It is found in the plastid. The protein localises to the chloroplast. It carries out the reaction 2 (2R)-3-phosphoglycerate + 2 H(+) = D-ribulose 1,5-bisphosphate + CO2 + H2O. It catalyses the reaction D-ribulose 1,5-bisphosphate + O2 = 2-phosphoglycolate + (2R)-3-phosphoglycerate + 2 H(+). In terms of biological role, ruBisCO catalyzes two reactions: the carboxylation of D-ribulose 1,5-bisphosphate, the primary event in carbon dioxide fixation, as well as the oxidative fragmentation of the pentose substrate in the photorespiration process. Both reactions occur simultaneously and in competition at the same active site. This chain is Ribulose bisphosphate carboxylase large chain, found in Tetradesmus obliquus (Green alga).